The primary structure comprises 266 residues: Proteasome subunit beta type-7 (266 aa).

Residues 1-34 constitute a propeptide, removed in mature form; that stretch reads MENLNRGGFDFDLCNRNNVLEKTGLRMKGFMKTG. The active-site Nucleophile is Thr35.

It belongs to the peptidase T1B family. The 26S proteasome consists of a 20S proteasome core and two 19S regulatory subunits. The 20S proteasome core is composed of 28 subunits that are arranged in four stacked rings, resulting in a barrel-shaped structure. The two end rings are each formed by seven alpha subunits, and the two central rings are each formed by seven beta subunits. The catalytic chamber with the active sites is on the inside of the barrel.

The protein resides in the cytoplasm. It localises to the nucleus. The catalysed reaction is Cleavage of peptide bonds with very broad specificity.. The proteasome is a multicatalytic proteinase complex which is characterized by its ability to cleave peptides with Arg, Phe, Tyr, Leu, and Glu adjacent to the leaving group at neutral or slightly basic pH. The proteasome has an ATP-dependent proteolytic activity. This Dictyostelium discoideum (Social amoeba) protein is Proteasome subunit beta type-7 (psmB7).